Reading from the N-terminus, the 184-residue chain is Cathelicidin-related peptide Pt_CRAMP1 (184 aa).

A signal peptide spans 1–22 (MEGFFWKTWLVVAAFAIGGTSS). A propeptide spanning residues 23 to 150 (LPHKPLTYEE…EDEKDQPRRV (128 aa)) is cleaved from the precursor. Disulfide bonds link C81/C92 and C103/C120. Acidic residues predominate over residues 125-144 (EDEEQNQEEEEEEEKEEDEK). Residues 125 to 147 (EDEEQNQEEEEEEEKEEDEKDQP) are disordered.

It belongs to the cathelicidin family. In terms of tissue distribution, expressed by the venom gland.

The protein resides in the secreted. Its subcellular location is the target cell membrane. Its function is as follows. Potent antimicrobial peptide against Gram-negative (MIC=2 ug/ml against E.coli ATCC 25922, MIC=8 ug/ml against P.aeruginosa) and Gram-positive bacteria (MIC=32 ug/ml against E.faecalis, MIC=32 ug/ml against S.aureus). Adopts an amphipathic alpha helical conformation, that may allow to partition into the target membrane. High hemolytic activities have been observed on mammalian cells. This chain is Cathelicidin-related peptide Pt_CRAMP1, found in Pseudonaja textilis (Eastern brown snake).